Here is a 321-residue protein sequence, read N- to C-terminus: Type 3 secretion system translocon protein SctB (321 aa).

The chain crosses the membrane as a helical span at residues 99–119 (AALIGGAISSVLGILGSFAAI).

The protein belongs to the SctB/EspB family. As to quaternary structure, the core secretion machinery of the T3SS is composed of approximately 20 different proteins, including cytoplasmic components, a base, an export apparatus and a needle. This subunit is involved in the formation of a pore, called the translocon, in host membrane.

The protein localises to the secreted. The protein resides in the cell surface. Its subcellular location is the host membrane. Its function is as follows. Component of the type III secretion system (T3SS), also called injectisome, which is used to inject bacterial effector proteins into eukaryotic host cells. EspD and EspB are inserted into the host membrane where they form a pore and allow the translocation of effector proteins into the cytosol of target cells. Necessary for intimate attachment to epithelial cells. The protein is Type 3 secretion system translocon protein SctB of Escherichia coli O127:H6 (strain E2348/69 / EPEC).